A 74-amino-acid polypeptide reads, in one-letter code: Antimicrobial peptide HsAp2 (74 aa).

A signal peptide spans 1 to 21; that stretch reads MSRRLILILVLVAMLVKTMAG. A propeptide spanning residues 22–33 is cleaved from the precursor; that stretch reads MESKWVETTYEI. Position 65 is a proline amide (proline 65). Positions 69–74 are excised as a propeptide; sequence AISEQT.

It belongs to the non-disulfide-bridged peptide (NDBP) superfamily. Medium-length antimicrobial peptide (group 3) family. In terms of tissue distribution, expressed by the venom gland.

The protein localises to the secreted. Its subcellular location is the target cell membrane. Possesses antimicrobial activity against both Gram-negative and Gram-positive bacteria, as well as against the fungus C.tropicalis. Also possesses a relatively high hemolytic activity. May act by disrupting the integrity of the bacterial cell membrane. In Heterometrus spinifer (Asia giant forest scorpion), this protein is Antimicrobial peptide HsAp2.